The following is a 132-amino-acid chain: Probable histone H2A.1 (132 aa).

The interval 1 to 22 is disordered; the sequence is MAGRGKTLGSGSAKKATTRSSK.

This sequence belongs to the histone H2A family. As to quaternary structure, the nucleosome is a histone octamer containing two molecules each of H2A, H2B, H3 and H4 assembled in one H3-H4 heterotetramer and two H2A-H2B heterodimers. The octamer wraps approximately 147 bp of DNA. In terms of processing, not ubiquitinated. As to expression, low level of expression; mainly in roots. Found in the root cap cells and in non dividing tissues of the plant, including the root elongation and maturation zones and the leaf veins.

Its subcellular location is the nucleus. The protein localises to the chromosome. Core component of nucleosome. Nucleosomes wrap and compact DNA into chromatin, limiting DNA accessibility to the cellular machineries which require DNA as a template. Histones thereby play a central role in transcription regulation, DNA repair, DNA replication and chromosomal stability. DNA accessibility is regulated via a complex set of post-translational modifications of histones, also called histone code, and nucleosome remodeling. The protein is Probable histone H2A.1 of Arabidopsis thaliana (Mouse-ear cress).